The following is a 364-amino-acid chain: Caffeic acid 3-O-methyltransferase 2 (364 aa).

129-135 (MNQDKVL) provides a ligand contact to substrate. The tract at residues 161–179 (AFEYHGTDPRFNKVFNKGM) is substrate binding. Residues glycine 207, aspartate 230, aspartate 250, methionine 251, and lysine 264 each contribute to the S-adenosyl-L-methionine site. Histidine 268 acts as the Proton acceptor in catalysis.

The protein belongs to the class I-like SAM-binding methyltransferase superfamily. Cation-independent O-methyltransferase family. COMT subfamily. In terms of assembly, homodimer.

It catalyses the reaction (E)-caffeate + S-adenosyl-L-methionine = (E)-ferulate + S-adenosyl-L-homocysteine + H(+). It functions in the pathway aromatic compound metabolism; phenylpropanoid biosynthesis. In terms of biological role, catalyzes the conversion of caffeic acid to ferulic acid and of 5-hydroxyferulic acid to sinapic acid. The resulting products may subsequently be converted to the corresponding alcohols that are incorporated into lignins. The sequence is that of Caffeic acid 3-O-methyltransferase 2 (OMT2) from Populus tremuloides (Quaking aspen).